A 328-amino-acid chain; its full sequence is Chlorate reductase subunit beta (328 aa).

4Fe-4S ferredoxin-type domains lie at 6–35 (VAYV…RDGR), 125–156 (NHSF…KRPE), and 158–187 (GIVV…FNLQ). Cys-15, Cys-18, Cys-21, Cys-25, Cys-134, Cys-137, and Cys-142 together coordinate [4Fe-4S] cluster. The [3Fe-4S] cluster site is built by Cys-146, Cys-167, and Cys-173. Residues Cys-177, Cys-194, Cys-197, Cys-209, and Cys-213 each contribute to the [4Fe-4S] cluster site.

As to quaternary structure, heterotrimer of alpha, beta and gamma subunits. [3Fe-4S] cluster is required as a cofactor. [4Fe-4S] cluster serves as cofactor.

Its subcellular location is the periplasm. In terms of biological role, electron transfer subunit of the terminal reductase during anaerobic growth on chlorate. The protein is Chlorate reductase subunit beta (clrB) of Ideonella dechloratans.